Here is a 156-residue protein sequence, read N- to C-terminus: Inner membrane protein YlaC (156 aa).

The Cytoplasmic portion of the chain corresponds to 1–35; it reads MTEIQRLLTETIESLNTREKRDNKPRFSISFIRKH. A helical membrane pass occupies residues 36 to 56; it reads PGLFIGMYVAFFATLAVMLQS. Residues 57–58 lie on the Periplasmic side of the membrane; it reads ET. Residues 59-79 traverse the membrane as a helical segment; the sequence is LSGSVWLLVVLFILLNGFFFF. Residues 80–156 lie on the Cytoplasmic side of the membrane; sequence DVYPRYRYED…FTLARAESTS (77 aa).

Its subcellular location is the cell inner membrane. This is Inner membrane protein YlaC (ylaC) from Escherichia coli (strain K12).